The primary structure comprises 317 residues: UDP-3-O-acylglucosamine N-acyltransferase (317 aa).

Histidine 229 serves as the catalytic Proton acceptor.

It belongs to the transferase hexapeptide repeat family. LpxD subfamily. In terms of assembly, homotrimer.

It carries out the reaction a UDP-3-O-[(3R)-3-hydroxyacyl]-alpha-D-glucosamine + a (3R)-hydroxyacyl-[ACP] = a UDP-2-N,3-O-bis[(3R)-3-hydroxyacyl]-alpha-D-glucosamine + holo-[ACP] + H(+). Its pathway is bacterial outer membrane biogenesis; LPS lipid A biosynthesis. Its function is as follows. Catalyzes the N-acylation of UDP-3-O-acylglucosamine using 3-hydroxyacyl-ACP as the acyl donor. Is involved in the biosynthesis of lipid A, a phosphorylated glycolipid that anchors the lipopolysaccharide to the outer membrane of the cell. The chain is UDP-3-O-acylglucosamine N-acyltransferase from Campylobacter curvus (strain 525.92).